The chain runs to 65 residues: Large ribosomal subunit protein bL35 (65 aa).

Residues 1 to 26 (MPKMKTNKSAQKRFKKTGSGRFKCKQ) form a disordered region. The segment covering 10–26 (AQKRFKKTGSGRFKCKQ) has biased composition (basic residues).

This sequence belongs to the bacterial ribosomal protein bL35 family.

The chain is Large ribosomal subunit protein bL35 from Hydrogenovibrio crunogenus (strain DSM 25203 / XCL-2) (Thiomicrospira crunogena).